Reading from the N-terminus, the 202-residue chain is Mitochondrial import receptor subunit TOM20-3 (202 aa).

Methionine 1 bears the N-acetylmethionine mark. Residues 1 to 174 (MDTETEFDRI…NKKSSDAKYD (174 aa)) lie on the Cytoplasmic side of the membrane. TPR repeat units lie at residues 38 to 74 (GGVL…DPKK) and 86 to 119 (TSFA…QPDN). The tract at residues 146-166 (SQPMGRVEAPAPPSSKAVKNK) is disordered. Residues 175 to 192 (AMGWVILAIGVVAWISFA) traverse the membrane as a helical segment. Residues 193 to 202 (KANVPVSPPR) are Mitochondrial intermembrane-facing.

It belongs to the Tom20 family. In terms of assembly, forms part of the preprotein translocase complex of the outer mitochondrial membrane (TOM complex) which consists of at least 6 different proteins (TOM5, TOM6, TOM7, TOM20, TOM22/TOM9 and TOM40). Component of a mitochondrial large protein complex that contains, at least, MIC60, DGS1, TOM40, TOM20 proteins, and petC/RISP. The N-terminus is blocked. As to expression, expressed in roots, flowers, young cotyledons and leaves.

The protein localises to the mitochondrion outer membrane. Functionally, central component of the receptor complex responsible for the recognition and translocation of cytosolically synthesized mitochondrial preproteins. Together with TOM22 functions as the transit peptide receptor at the surface of the mitochondrion outer membrane and facilitates the movement of preproteins into the translocation pore. This Arabidopsis thaliana (Mouse-ear cress) protein is Mitochondrial import receptor subunit TOM20-3.